The sequence spans 151 residues: Chaperonin GroEL (151 aa).

41–45 contacts ATP; sequence DGTTT.

This sequence belongs to the chaperonin (HSP60) family. Forms a cylinder of 14 subunits composed of two heptameric rings stacked back-to-back. Interacts with the co-chaperonin GroES.

It localises to the cytoplasm. It catalyses the reaction ATP + H2O + a folded polypeptide = ADP + phosphate + an unfolded polypeptide.. In terms of biological role, together with its co-chaperonin GroES, plays an essential role in assisting protein folding. The GroEL-GroES system forms a nano-cage that allows encapsulation of the non-native substrate proteins and provides a physical environment optimized to promote and accelerate protein folding. The chain is Chaperonin GroEL from Mycobacterium marinum.